We begin with the raw amino-acid sequence, 196 residues long: Adenylate kinase (196 aa).

An ATP-binding site is contributed by 9-17 (GIPGVGKST).

The protein belongs to the archaeal adenylate kinase family.

It is found in the cytoplasm. It catalyses the reaction AMP + ATP = 2 ADP. This chain is Adenylate kinase, found in Thermococcus sibiricus (strain DSM 12597 / MM 739).